We begin with the raw amino-acid sequence, 60 residues long: Large ribosomal subunit protein uL30 (60 aa).

Belongs to the universal ribosomal protein uL30 family. Part of the 50S ribosomal subunit.

The protein is Large ribosomal subunit protein uL30 of Dehalococcoides mccartyi (strain ATCC BAA-2266 / KCTC 15142 / 195) (Dehalococcoides ethenogenes (strain 195)).